A 676-amino-acid polypeptide reads, in one-letter code: Methionine--tRNA ligase (676 aa).

The 'HIGH' region motif lies at 15-25 (PYANGPIHLGH). Positions 146, 149, 159, and 162 each coordinate Zn(2+). Positions 332 to 336 (KMSKS) match the 'KMSKS' region motif. Residue Lys-335 participates in ATP binding. Positions 575–676 (DFAKIDLRIA…EGAQPGMRVK (102 aa)) constitute a tRNA-binding domain.

This sequence belongs to the class-I aminoacyl-tRNA synthetase family. MetG type 1 subfamily. As to quaternary structure, homodimer. The cofactor is Zn(2+).

It localises to the cytoplasm. The enzyme catalyses tRNA(Met) + L-methionine + ATP = L-methionyl-tRNA(Met) + AMP + diphosphate. Is required not only for elongation of protein synthesis but also for the initiation of all mRNA translation through initiator tRNA(fMet) aminoacylation. The sequence is that of Methionine--tRNA ligase from Shewanella sp. (strain MR-7).